The chain runs to 422 residues: Mannose-1-phosphate guanylyltransferase regulatory subunit alpha-B (422 aa).

Residues 2-253 are substrate-binding domain; the sequence is LKAIILIGGP…QHFWSQIKSA (252 aa). GDP-alpha-D-mannose-binding residues include Glu-85 and Gln-249. Residues 275–422 form a hexapeptide repeat domain region; sequence LATNQGGTPK…NRSFKNQIIL (148 aa). Residues 358 to 386 form a C-loop region; the sequence is TPSDPNPNDPYAKIDSETLFRDGGLTPSI.

This sequence belongs to the transferase hexapeptide repeat family. In terms of assembly, component of the GMPPA-GMPPB mannose-1-phosphate guanylyltransferase complex composed of 4 GMPPA subunits and 8 GMPPB subunits; the complex is organized into three layers, a central layer made up of 2 GMPPA dimers sandwiched between two layers each made up of 2 GMPPB dimers.

Its pathway is nucleotide-sugar biosynthesis; GDP-alpha-D-mannose biosynthesis; GDP-alpha-D-mannose from alpha-D-mannose 1-phosphate (GTP route): step 1/1. Regulatory subunit of the GMPPA-GMPPB mannose-1-phosphate guanylyltransferase complex; reduces the catalytic activity of GMPPB when part of the complex. Mediates allosteric feedback inhibition of GMPPB catalytic activity upon binding GDP-alpha-D-mannose. Together with GMPPB regulates GDP-alpha-D-mannose levels. One of two paralogs (gmppaa and gmppab) that may have redundant functions. The chain is Mannose-1-phosphate guanylyltransferase regulatory subunit alpha-B (gmppab) from Danio rerio (Zebrafish).